Reading from the N-terminus, the 874-residue chain is Alanine--tRNA ligase (874 aa).

Zn(2+) contacts are provided by His-564, His-568, Cys-665, and His-669.

It belongs to the class-II aminoacyl-tRNA synthetase family. Zn(2+) is required as a cofactor.

Its subcellular location is the cytoplasm. The catalysed reaction is tRNA(Ala) + L-alanine + ATP = L-alanyl-tRNA(Ala) + AMP + diphosphate. In terms of biological role, catalyzes the attachment of alanine to tRNA(Ala) in a two-step reaction: alanine is first activated by ATP to form Ala-AMP and then transferred to the acceptor end of tRNA(Ala). Also edits incorrectly charged Ser-tRNA(Ala) and Gly-tRNA(Ala) via its editing domain. The polypeptide is Alanine--tRNA ligase (Burkholderia mallei (strain ATCC 23344)).